Consider the following 1430-residue polypeptide: 3'-5' RNA helicase YTHDC2 (1430 aa).

Positions M1–K37 are disordered. Residues P14–A33 show a composition bias toward gly residues. One can recognise an R3H domain in the interval D38–D106. The Helicase ATP-binding domain maps to V203 to Q369. G216–T223 serves as a coordination point for ATP. A DEAH box motif is present at residues D316–H319. 2 ANK repeats span residues T506–S538 and N539–L571. The region spanning L612–A784 is the Helicase C-terminal domain. Residues S1089, S1090, and S1092 each carry the phosphoserine modification. Positions E1164 to G1174 are enriched in polar residues. The interval E1164 to V1288 is disordered. Low complexity predominate over residues S1191–K1200. S1202 carries the phosphoserine modification. Over residues K1231–D1249 the composition is skewed to basic and acidic residues. Residues Q1250–P1264 show a composition bias toward low complexity. Phosphoserine is present on residues S1263, S1267, and S1281. The YTH domain occupies V1288 to W1418. RNA-binding positions include K1294 to S1296, W1310, and W1360.

Belongs to the DEAD box helicase family. DEAH subfamily. As to quaternary structure, interacts with MEIOC; binds transcripts that regulate the mitotic cell cycle inhibiting progression into metaphase, thereby allowing meiotic prophase to proceed normally. Interacts (via ANK repeats) with XRN1. Interacts with ZCCHC4. Associates with the small ribosomal subunit. Interacts with RBM46. As to expression, expressed in testis. Not detected in spermatogonia next to the tubule wall but is strongly expressed in spermatocytes, suggesting that it is up-regulated in germ cells upon entry into meiosis.

Its subcellular location is the cytoplasm. The protein localises to the perinuclear region. The enzyme catalyses ATP + H2O = ADP + phosphate + H(+). 3'-5' RNA helicase that plays a key role in the male and female germline by promoting transition from mitotic to meiotic divisions in stem cells. Specifically recognizes and binds N6-methyladenosine (m6A)-containing RNAs, a modification present at internal sites of mRNAs and some non-coding RNAs that plays a role in the efficiency of RNA processing and stability. Essential for ensuring a successful progression of the meiotic program in the germline by regulating the level of m6A-containing RNAs. Acts by binding and promoting degradation of m6A-containing mRNAs: the 3'-5' RNA helicase activity is required for this process and RNA degradation may be mediated by XRN1 exoribonuclease. Required for both spermatogenesis and oogenesis. The sequence is that of 3'-5' RNA helicase YTHDC2 from Homo sapiens (Human).